We begin with the raw amino-acid sequence, 129 residues long: Phosphoribosyl-AMP cyclohydrolase (129 aa).

Asp85 is a Mg(2+) binding site. Cys86 serves as a coordination point for Zn(2+). Residues Asp87 and Asp89 each contribute to the Mg(2+) site. Cys102 and Cys109 together coordinate Zn(2+).

The protein belongs to the PRA-CH family. Homodimer. Mg(2+) serves as cofactor. The cofactor is Zn(2+).

It is found in the cytoplasm. It catalyses the reaction 1-(5-phospho-beta-D-ribosyl)-5'-AMP + H2O = 1-(5-phospho-beta-D-ribosyl)-5-[(5-phospho-beta-D-ribosylamino)methylideneamino]imidazole-4-carboxamide. It participates in amino-acid biosynthesis; L-histidine biosynthesis; L-histidine from 5-phospho-alpha-D-ribose 1-diphosphate: step 3/9. Catalyzes the hydrolysis of the adenine ring of phosphoribosyl-AMP. This Methanococcus maripaludis (strain C6 / ATCC BAA-1332) protein is Phosphoribosyl-AMP cyclohydrolase.